The sequence spans 211 residues: Protein-L-isoaspartate O-methyltransferase (211 aa).

The active site involves Ser60.

Belongs to the methyltransferase superfamily. L-isoaspartyl/D-aspartyl protein methyltransferase family.

It localises to the cytoplasm. It catalyses the reaction [protein]-L-isoaspartate + S-adenosyl-L-methionine = [protein]-L-isoaspartate alpha-methyl ester + S-adenosyl-L-homocysteine. Functionally, catalyzes the methyl esterification of L-isoaspartyl residues in peptides and proteins that result from spontaneous decomposition of normal L-aspartyl and L-asparaginyl residues. It plays a role in the repair and/or degradation of damaged proteins. The sequence is that of Protein-L-isoaspartate O-methyltransferase from Alteromonas mediterranea (strain DSM 17117 / CIP 110805 / LMG 28347 / Deep ecotype).